A 295-amino-acid chain; its full sequence is Biliverdin reductase A (295 aa).

Residues M1–S2 constitute a propeptide that is removed on maturation. NAD(+) contacts are provided by residues R18–A19, S76–H79, and Y97. At S154 the chain carries Phosphoserine. NAD(+) is bound at residue S167. Residue T173 is modified to Phosphothreonine. 2 positions are modified to phosphoserine: S177 and S229. N6-acetyllysine occurs at positions 247 and 252. Zn(2+) is bound by residues H279, C280, C291, and H292.

Belongs to the Gfo/Idh/MocA family. Biliverdin reductase subfamily. Monomer. Zn(2+) is required as a cofactor.

The protein localises to the cytoplasm. It localises to the cytosol. The catalysed reaction is (4Z,15Z)-bilirubin IXalpha + NAD(+) = biliverdin IXalpha + NADH + H(+). The enzyme catalyses (4Z,15Z)-bilirubin IXalpha + NADP(+) = biliverdin IXalpha + NADPH + H(+). It participates in porphyrin-containing compound metabolism; protoheme degradation. Its function is as follows. Reduces the gamma-methene bridge of the open tetrapyrrole, biliverdin IXalpha, to bilirubin with the concomitant oxidation of a NADH or NADPH cofactor. Does not reduce bilirubin IXbeta. Uses the reactants NADH or NADPH depending on the pH; NADH is used at the acidic pH range (6-6.9) and NADPH at the alkaline range (8.5-8.7). NADPH, however, is the probable reactant in biological systems. This Mus musculus (Mouse) protein is Biliverdin reductase A.